The sequence spans 301 residues: Probable 5-dehydro-4-deoxyglucarate dehydratase (301 aa).

The protein belongs to the DapA family.

It carries out the reaction 5-dehydro-4-deoxy-D-glucarate + H(+) = 2,5-dioxopentanoate + CO2 + H2O. It functions in the pathway carbohydrate acid metabolism; D-glucarate degradation; 2,5-dioxopentanoate from D-glucarate: step 2/2. The polypeptide is Probable 5-dehydro-4-deoxyglucarate dehydratase (Cereibacter sphaeroides (strain ATCC 17023 / DSM 158 / JCM 6121 / CCUG 31486 / LMG 2827 / NBRC 12203 / NCIMB 8253 / ATH 2.4.1.) (Rhodobacter sphaeroides)).